Reading from the N-terminus, the 427-residue chain is Trigger factor (427 aa).

The 86-residue stretch at 163–248 (GDTVVIDFVG…IHEVKTKEVP (86 aa)) folds into the PPIase FKBP-type domain.

This sequence belongs to the FKBP-type PPIase family. Tig subfamily.

It is found in the cytoplasm. The enzyme catalyses [protein]-peptidylproline (omega=180) = [protein]-peptidylproline (omega=0). Its function is as follows. Involved in protein export. Acts as a chaperone by maintaining the newly synthesized protein in an open conformation. Functions as a peptidyl-prolyl cis-trans isomerase. This Streptococcus pyogenes serotype M49 (strain NZ131) protein is Trigger factor.